A 176-amino-acid polypeptide reads, in one-letter code: Dynein light chain Tctex-type 5-B (176 aa).

This sequence belongs to the dynein light chain Tctex-type family.

The sequence is that of Dynein light chain Tctex-type 5-B (Dynlt5-b) from Xenopus laevis (African clawed frog).